The chain runs to 333 residues: Putative ketol-acid reductoisomerase 2 (333 aa).

The KARI N-terminal Rossmann domain occupies 1–182; the sequence is MDKTVLDANL…AIPGGIAVIS (182 aa). The 147-residue stretch at 183 to 329 folds into the KARI C-terminal knotted domain; sequence SFEEEALLDL…KELYKLLGRK (147 aa).

It belongs to the ketol-acid reductoisomerase family.

The enzyme catalyses (2R)-2,3-dihydroxy-3-methylbutanoate + NADP(+) = (2S)-2-acetolactate + NADPH + H(+). The catalysed reaction is (2R,3R)-2,3-dihydroxy-3-methylpentanoate + NADP(+) = (S)-2-ethyl-2-hydroxy-3-oxobutanoate + NADPH + H(+). The protein operates within amino-acid biosynthesis; L-isoleucine biosynthesis; L-isoleucine from 2-oxobutanoate: step 2/4. It participates in amino-acid biosynthesis; L-valine biosynthesis; L-valine from pyruvate: step 2/4. This is Putative ketol-acid reductoisomerase 2 (ilvC2) from Saccharolobus solfataricus (strain ATCC 35092 / DSM 1617 / JCM 11322 / P2) (Sulfolobus solfataricus).